A 526-amino-acid polypeptide reads, in one-letter code: Na(+)/H(+) antiporter NhaB (526 aa).

The next 11 helical transmembrane spans lie at 14–34 (FLGY…LVNP), 63–83 (CYPL…GMTS), 99–119 (MLLV…LFVF), 122–142 (LLLR…AAAF), 146–166 (FLDA…FYGI), 206–226 (LLMH…VGEP), 239–259 (FVSF…CGIL), 307–327 (AVIG…VGLI), 357–377 (FTAL…QQLF), 451–471 (ATPN…APLI), and 479–499 (VIMA…CVEF).

It belongs to the NhaB Na(+)/H(+) (TC 2.A.34) antiporter family.

Its subcellular location is the cell inner membrane. It catalyses the reaction 2 Na(+)(in) + 3 H(+)(out) = 2 Na(+)(out) + 3 H(+)(in). Its function is as follows. Na(+)/H(+) antiporter that extrudes sodium in exchange for external protons. In Pectobacterium carotovorum subsp. carotovorum (strain PC1), this protein is Na(+)/H(+) antiporter NhaB.